Consider the following 343-residue polypeptide: S-adenosylmethionine:tRNA ribosyltransferase-isomerase (343 aa).

Belongs to the QueA family. In terms of assembly, monomer.

It localises to the cytoplasm. The catalysed reaction is 7-aminomethyl-7-carbaguanosine(34) in tRNA + S-adenosyl-L-methionine = epoxyqueuosine(34) in tRNA + adenine + L-methionine + 2 H(+). Its pathway is tRNA modification; tRNA-queuosine biosynthesis. Transfers and isomerizes the ribose moiety from AdoMet to the 7-aminomethyl group of 7-deazaguanine (preQ1-tRNA) to give epoxyqueuosine (oQ-tRNA). This is S-adenosylmethionine:tRNA ribosyltransferase-isomerase from Dehalococcoides mccartyi (strain CBDB1).